A 619-amino-acid polypeptide reads, in one-letter code: Dihydroxy-acid dehydratase (619 aa).

Mg(2+) is bound at residue aspartate 81. [2Fe-2S] cluster is bound at residue cysteine 122. Mg(2+)-binding residues include aspartate 123 and lysine 124. Lysine 124 is modified (N6-carboxylysine). Cysteine 195 is a binding site for [2Fe-2S] cluster. Glutamate 494 serves as a coordination point for Mg(2+). The active-site Proton acceptor is the serine 520.

The protein belongs to the IlvD/Edd family. In terms of assembly, homodimer. [2Fe-2S] cluster serves as cofactor. The cofactor is Mg(2+).

The catalysed reaction is (2R)-2,3-dihydroxy-3-methylbutanoate = 3-methyl-2-oxobutanoate + H2O. It carries out the reaction (2R,3R)-2,3-dihydroxy-3-methylpentanoate = (S)-3-methyl-2-oxopentanoate + H2O. Its pathway is amino-acid biosynthesis; L-isoleucine biosynthesis; L-isoleucine from 2-oxobutanoate: step 3/4. The protein operates within amino-acid biosynthesis; L-valine biosynthesis; L-valine from pyruvate: step 3/4. Its function is as follows. Functions in the biosynthesis of branched-chain amino acids. Catalyzes the dehydration of (2R,3R)-2,3-dihydroxy-3-methylpentanoate (2,3-dihydroxy-3-methylvalerate) into 2-oxo-3-methylpentanoate (2-oxo-3-methylvalerate) and of (2R)-2,3-dihydroxy-3-methylbutanoate (2,3-dihydroxyisovalerate) into 2-oxo-3-methylbutanoate (2-oxoisovalerate), the penultimate precursor to L-isoleucine and L-valine, respectively. The protein is Dihydroxy-acid dehydratase of Shewanella sp. (strain MR-7).